We begin with the raw amino-acid sequence, 556 residues long: Formate--tetrahydrofolate ligase (556 aa).

An ATP-binding site is contributed by 65–72; that stretch reads TPAGEGKT.

Belongs to the formate--tetrahydrofolate ligase family.

It carries out the reaction (6S)-5,6,7,8-tetrahydrofolate + formate + ATP = (6R)-10-formyltetrahydrofolate + ADP + phosphate. It functions in the pathway one-carbon metabolism; tetrahydrofolate interconversion. In Alkaliphilus oremlandii (strain OhILAs) (Clostridium oremlandii (strain OhILAs)), this protein is Formate--tetrahydrofolate ligase.